Reading from the N-terminus, the 461-residue chain is Photosystem II CP43 reaction center protein (461 aa).

The propeptide occupies 1-2; that stretch reads ME. Thr-3 is modified (N-acetylthreonine). Thr-3 is subject to Phosphothreonine. 5 consecutive transmembrane segments (helical) span residues 57–81, 122–143, 166–188, 243–263, and 279–300; these read LFEV…PHLA, LLGP…KDRN, KASY…RKIT, KPFA…LSYS, and WFNN…ASQA. Residue Glu-355 participates in [CaMn4O5] cluster binding. The chain crosses the membrane as a helical span at residues 435-459; that stretch reads RARAAAAGFEKGIDRDFEPVLSMTP.

It belongs to the PsbB/PsbC family. PsbC subfamily. PSII is composed of 1 copy each of membrane proteins PsbA, PsbB, PsbC, PsbD, PsbE, PsbF, PsbH, PsbI, PsbJ, PsbK, PsbL, PsbM, PsbT, PsbX, PsbY, PsbZ, Psb30/Ycf12, at least 3 peripheral proteins of the oxygen-evolving complex and a large number of cofactors. It forms dimeric complexes. Binds multiple chlorophylls and provides some of the ligands for the Ca-4Mn-5O cluster of the oxygen-evolving complex. It may also provide a ligand for a Cl- that is required for oxygen evolution. PSII binds additional chlorophylls, carotenoids and specific lipids. serves as cofactor.

Its subcellular location is the plastid. The protein localises to the chloroplast thylakoid membrane. In terms of biological role, one of the components of the core complex of photosystem II (PSII). It binds chlorophyll and helps catalyze the primary light-induced photochemical processes of PSII. PSII is a light-driven water:plastoquinone oxidoreductase, using light energy to abstract electrons from H(2)O, generating O(2) and a proton gradient subsequently used for ATP formation. This chain is Photosystem II CP43 reaction center protein, found in Lotus japonicus (Lotus corniculatus var. japonicus).